Consider the following 151-residue polypeptide: Deoxyuridine 5'-triphosphate nucleotidohydrolase (151 aa).

Substrate contacts are provided by residues 70–72, Asn83, and 87–89; these read RSG and LID.

The protein belongs to the dUTPase family. The cofactor is Mg(2+).

The enzyme catalyses dUTP + H2O = dUMP + diphosphate + H(+). It participates in pyrimidine metabolism; dUMP biosynthesis; dUMP from dCTP (dUTP route): step 2/2. Its function is as follows. This enzyme is involved in nucleotide metabolism: it produces dUMP, the immediate precursor of thymidine nucleotides and it decreases the intracellular concentration of dUTP so that uracil cannot be incorporated into DNA. In Methylococcus capsulatus (strain ATCC 33009 / NCIMB 11132 / Bath), this protein is Deoxyuridine 5'-triphosphate nucleotidohydrolase.